We begin with the raw amino-acid sequence, 399 residues long: Fructose-bisphosphate aldolase 1, chloroplastic (399 aa).

A chloroplast-targeting transit peptide spans 1–48 (MASSTATMLKASPVKSDWVKGQSLLLRQPSSVSAIRSHVAPSALTVRA). Substrate is bound at residue Arg96. Ser158 carries the phosphoserine modification. Residue Lys186 coordinates substrate. The residue at position 216 (Ser216) is a Phosphoserine. Glu226 serves as the catalytic Proton acceptor. Residue Lys268 is the Schiff-base intermediate with dihydroxyacetone-P of the active site. Residue 310-312 (SGG) coordinates substrate. Lys395 bears the N6,N6,N6-trimethyllysine mark.

This sequence belongs to the class I fructose-bisphosphate aldolase family. As to quaternary structure, homotetramer. Can be trimethylated at Lys-395 by LSMT-L, but the trimethylation has no effect in vitro on the kinetic properties of the enzyme. Post-translationally, S-glutathionylated. Highly expressed in rosettes leaves and cauline leaves.

Its subcellular location is the plastid. It localises to the chloroplast. It is found in the plastoglobule. The protein resides in the chloroplast stroma. The enzyme catalyses beta-D-fructose 1,6-bisphosphate = D-glyceraldehyde 3-phosphate + dihydroxyacetone phosphate. The protein operates within carbohydrate degradation; glycolysis; D-glyceraldehyde 3-phosphate and glycerone phosphate from D-glucose: step 4/4. In terms of biological role, plays a key role in glycolysis and gluconeogenesis. This chain is Fructose-bisphosphate aldolase 1, chloroplastic, found in Arabidopsis thaliana (Mouse-ear cress).